The following is a 152-amino-acid chain: Large ribosomal subunit protein bL9 (152 aa).

This sequence belongs to the bacterial ribosomal protein bL9 family.

Binds to the 23S rRNA. This is Large ribosomal subunit protein bL9 from Gloeothece citriformis (strain PCC 7424) (Cyanothece sp. (strain PCC 7424)).